The following is a 666-amino-acid chain: Long chain acyl-CoA synthetase 4 (666 aa).

Residue 228–239 (IMYTSGTTGDPK) participates in ATP binding. The tract at residues 495 to 519 (DGWLHTGDVGEWQPDGSMKIIDRKK) is fatty acid-binding.

The protein belongs to the ATP-dependent AMP-binding enzyme family. Mg(2+) is required as a cofactor.

It carries out the reaction a long-chain fatty acid + ATP + CoA = a long-chain fatty acyl-CoA + AMP + diphosphate. The protein operates within lipid metabolism; fatty acid metabolism. In terms of biological role, activation of long-chain fatty acids for both synthesis of cellular lipids, and degradation via beta-oxidation. Preferentially uses palmitate, palmitoleate, oleate and linoleate. This is Long chain acyl-CoA synthetase 4 (LACS4) from Arabidopsis thaliana (Mouse-ear cress).